Consider the following 312-residue polypeptide: DNA-directed RNA polymerase subunit alpha (312 aa).

Residues 1 to 226 (MIEFEKPTIT…EHLGLFTDLT (226 aa)) form an alpha N-terminal domain (alpha-NTD) region. The segment at 242 to 312 (SDDRMLDRTI…DLGLGLKKDK (71 aa)) is alpha C-terminal domain (alpha-CTD).

Belongs to the RNA polymerase alpha chain family. In terms of assembly, homodimer. The RNAP catalytic core consists of 2 alpha, 1 beta, 1 beta' and 1 omega subunit. When a sigma factor is associated with the core the holoenzyme is formed, which can initiate transcription.

It catalyses the reaction RNA(n) + a ribonucleoside 5'-triphosphate = RNA(n+1) + diphosphate. Functionally, DNA-dependent RNA polymerase catalyzes the transcription of DNA into RNA using the four ribonucleoside triphosphates as substrates. The chain is DNA-directed RNA polymerase subunit alpha from Streptococcus suis (strain 98HAH33).